The chain runs to 486 residues: Glutamate--tRNA ligase 2 (486 aa).

The short motif at 12-22 (PSPTGELHIGN) is the 'HIGH' region element. The short motif at 252–256 (KLSKR) is the 'KMSKS' region element. An ATP-binding site is contributed by Lys255.

It belongs to the class-I aminoacyl-tRNA synthetase family. Glutamate--tRNA ligase type 1 subfamily. Monomer.

Its subcellular location is the cytoplasm. The catalysed reaction is tRNA(Glu) + L-glutamate + ATP = L-glutamyl-tRNA(Glu) + AMP + diphosphate. Its function is as follows. Catalyzes the attachment of glutamate to tRNA(Glu) in a two-step reaction: glutamate is first activated by ATP to form Glu-AMP and then transferred to the acceptor end of tRNA(Glu). This is Glutamate--tRNA ligase 2 from Syntrophus aciditrophicus (strain SB).